Consider the following 316-residue polypeptide: Tetrahydromethanopterin S-methyltransferase subunit H (316 aa).

Belongs to the MtrH family. As to quaternary structure, the complex is composed of 8 subunits; MtrA, MtrB, MtrC, MtrD, MtrE, MtrF, MtrG and MtrH.

The catalysed reaction is 5-methyl-5,6,7,8-tetrahydromethanopterin + coenzyme M + 2 Na(+)(in) = 5,6,7,8-tetrahydromethanopterin + methyl-coenzyme M + 2 Na(+)(out). Its pathway is one-carbon metabolism; methanogenesis from CO(2); methyl-coenzyme M from 5,10-methylene-5,6,7,8-tetrahydromethanopterin: step 2/2. Functionally, part of a complex that catalyzes the formation of methyl-coenzyme M and tetrahydromethanopterin from coenzyme M and methyl-tetrahydromethanopterin. This is an energy-conserving, sodium-ion translocating step. MtrH catalyzes the transfer of the methyl group from methyl-tetrahydromethanopterin to the corrinoid prosthetic group of MtrA. The chain is Tetrahydromethanopterin S-methyltransferase subunit H from Methanosarcina acetivorans (strain ATCC 35395 / DSM 2834 / JCM 12185 / C2A).